Here is a 178-residue protein sequence, read N- to C-terminus: Inner membrane-spanning protein YciB (178 aa).

A run of 5 helical transmembrane segments spans residues 12-32 (LFFA…VAIV), 50-70 (PMQW…LVLH), 74-94 (FIMW…LISD), 120-140 (LTFA…FVAF), and 145-165 (AVWV…FVLA).

It belongs to the YciB family.

It is found in the cell inner membrane. In terms of biological role, plays a role in cell envelope biogenesis, maintenance of cell envelope integrity and membrane homeostasis. The protein is Inner membrane-spanning protein YciB of Laribacter hongkongensis (strain HLHK9).